Here is an 81-residue protein sequence, read N- to C-terminus: Large ribosomal subunit protein bL27 (81 aa).

Positions 1-22 (MAHKKGQGSSRNGRDSNAQRRG) are disordered.

This sequence belongs to the bacterial ribosomal protein bL27 family.

The sequence is that of Large ribosomal subunit protein bL27 from Rhodopirellula baltica (strain DSM 10527 / NCIMB 13988 / SH1).